We begin with the raw amino-acid sequence, 85 residues long: Metallothionein-like protein 4B (85 aa).

Residues 1-20 (MADTGKGSASASCNDRCGCP) form a disordered region.

Belongs to the metallothionein superfamily. Type 15 family. As to expression, expressed specifically in seeds.

The protein localises to the cytoplasm. It is found in the nucleus. Its subcellular location is the cell membrane. In terms of biological role, metallothioneins have a high content of cysteine residues that bind various heavy metals. Functions as a metal chelator of copper (Cu) and zinc (Zn). Plays a role in storing and distributing Zn ion in seed. The polypeptide is Metallothionein-like protein 4B (MT4B) (Arabidopsis thaliana (Mouse-ear cress)).